The primary structure comprises 1121 residues: Solute carrier family 38 member 10 (1121 aa).

Transmembrane regions (helical) follow at residues 4–24, 36–58, 84–104, 120–140, 153–173, 229–249, 272–292, 323–343, 345–365, and 378–398; these read AAASNWGLITNIVNSIVGVSV, IVLGALLLVFCSWMTHQSCMFLV, LVETSMIGLMLGTCIAFYVVI, VGGTFRMFLLFAVSLCIVLPL, FSAMALLFYTVFMFVIVLSSL, IFASSLNVVTTFYVMVGFFGY, MLRVGFMMSVAVGFPMMILPC, ALTLSVVFGTMVGGILIPNVE, ILGLTGATMGSLICFICPALI, and VVLWVGLGILVVSTVTTLSVS. 3 disordered regions span residues 434–691, 731–904, and 965–1068; these read VVAV…EEAG, KEIH…AATG, and ISDG…ELAP. Composition is skewed to basic and acidic residues over residues 439 to 454, 466 to 475, 493 to 508, and 544 to 559; these read EDGREKPKLPKEREEL, PGREDGKEAQ, EAHRHEPPVPHDKVVV, and DSEREKREPEQGEVGK. Serine 612 carries the post-translational modification Phosphoserine. Basic and acidic residues-rich tracts occupy residues 645–659, 668–679, 731–752, 763–773, 802–811, and 863–876; these read DSDHGGKPPLPEEKP, EPREQRDVERAG, KEIHQQRQEDEEDKPRQVEVHP, EAPEGKARETM, SLEHPERPVG, and PAREAGGPEERLAE. At threonine 772 the chain carries Phosphothreonine. Phosphoserine is present on serine 802. Serine 890 and serine 966 each carry phosphoserine. Basic and acidic residues predominate over residues 976-998; sequence HRLDHGGYLEMRKEARGGDHMPV. Phosphoserine is present on serine 999. Composition is skewed to basic and acidic residues over residues 1035-1044 and 1057-1068; these read DNAKPNRDLK and DLGPHAEGELAP.

The protein belongs to the amino acid/polyamine transporter 2 family.

The protein localises to the membrane. It carries out the reaction L-glutamate(out) = L-glutamate(in). The enzyme catalyses L-glutamine(out) = L-glutamine(in). The catalysed reaction is L-alanine(in) = L-alanine(out). It catalyses the reaction L-serine(in) = L-serine(out). It carries out the reaction L-leucine(in) = L-leucine(out). Its function is as follows. Facilitates bidirectional transport of amino acids. May act as a glutamate sensor that regulates glutamate-glutamine cycle and mTOR signaling in the brain. The transport mechanism remains to be elucidated. The chain is Solute carrier family 38 member 10 from Pongo abelii (Sumatran orangutan).